The sequence spans 201 residues: Small ribosomal subunit protein uS4c (201 aa).

Positions 16–37 are disordered; the sequence is GALPGLTSKRPRSGSDLRNQSR. The S4 RNA-binding domain maps to 89–152; sequence MRLDNTLFRL…RSRTLIQNHI (64 aa).

This sequence belongs to the universal ribosomal protein uS4 family. As to quaternary structure, part of the 30S ribosomal subunit. Contacts protein S5. The interaction surface between S4 and S5 is involved in control of translational fidelity.

It localises to the plastid. The protein localises to the chloroplast. Functionally, one of the primary rRNA binding proteins, it binds directly to 16S rRNA where it nucleates assembly of the body of the 30S subunit. In terms of biological role, with S5 and S12 plays an important role in translational accuracy. The sequence is that of Small ribosomal subunit protein uS4c (rps4) from Chloranthus spicatus (Chulantree).